The chain runs to 77 residues: uncharacterized protein (77 aa).

This is an uncharacterized protein from Orgyia pseudotsugata multicapsid polyhedrosis virus (OpMNPV).